The primary structure comprises 142 residues: MSTQSVQTFGKKKTATAVAHVKAGKGLIKINGSPITLVQPEILRFKVYEPLTLVGLDKFQGIDIRVKVTGGGHVSQVYAIRQAIAKGLVAYHQKYVDEASKNELKKIFASYDKTLLVADSRRMEPKKFGGRGARARFQKSYR.

The protein belongs to the universal ribosomal protein uS9 family. As to quaternary structure, component of the small ribosomal subunit. Mature ribosomes consist of a small (40S) and a large (60S) subunit. The 40S subunit contains about 32 different proteins and 1 molecule of RNA (18S). The 60S subunit contains 45 different proteins and 3 molecules of RNA (25S, 5.8S and 5S).

The protein resides in the cytoplasm. Functionally, component of the ribosome, a large ribonucleoprotein complex responsible for the synthesis of proteins in the cell. The small ribosomal subunit (SSU) binds messenger RNAs (mRNAs) and translates the encoded message by selecting cognate aminoacyl-transfer RNA (tRNA) molecules. The large subunit (LSU) contains the ribosomal catalytic site termed the peptidyl transferase center (PTC), which catalyzes the formation of peptide bonds, thereby polymerizing the amino acids delivered by tRNAs into a polypeptide chain. The nascent polypeptides leave the ribosome through a tunnel in the LSU and interact with protein factors that function in enzymatic processing, targeting, and the membrane insertion of nascent chains at the exit of the ribosomal tunnel. The sequence is that of Small ribosomal subunit protein uS9 (RPS16A) from Candida albicans (strain SC5314 / ATCC MYA-2876) (Yeast).